Reading from the N-terminus, the 299-residue chain is Cancer/testis antigen family 47 member B1 (299 aa).

Over residues 1–10 the composition is skewed to basic and acidic residues; that stretch reads MSATGDRHPT. Disordered stretches follow at residues 1–102 and 215–299; these read MSAT…EGNE and AREP…SKGT. Composition is skewed to low complexity over residues 20–31 and 46–60; these read QEGAQAEAAGAG and VPAA…PVEG. Positions 81-101 are enriched in acidic residues; the sequence is AEEDSDIGPATEEEEEEEEGN. Basic and acidic residues predominate over residues 215–238; the sequence is AREPAEEAADEKPPEEAAEEKLTE. Composition is skewed to acidic residues over residues 239-251 and 268-281; these read EATE…EPTS and WDEE…EEEK. A coiled-coil region spans residues 270–298; sequence EEAQDAAGEEEKEQEKEKDVENKVKNSKG. The segment covering 282 to 293 has biased composition (basic and acidic residues); it reads EQEKEKDVENKV.

It belongs to the CT47 family.

This Homo sapiens (Human) protein is Cancer/testis antigen family 47 member B1.